A 273-amino-acid polypeptide reads, in one-letter code: Dermonecrotic toxin LdSicTox-alphaIB3b (273 aa).

Residue histidine 5 is part of the active site. Mg(2+)-binding residues include glutamate 25 and aspartate 27. The active-site Nucleophile is histidine 41. 2 disulfide bridges follow: cysteine 45-cysteine 51 and cysteine 47-cysteine 190. Position 85 (aspartate 85) interacts with Mg(2+).

Belongs to the arthropod phospholipase D family. Class II subfamily. The cofactor is Mg(2+). In terms of tissue distribution, expressed by the venom gland.

The protein resides in the secreted. It carries out the reaction an N-(acyl)-sphingosylphosphocholine = an N-(acyl)-sphingosyl-1,3-cyclic phosphate + choline. The enzyme catalyses an N-(acyl)-sphingosylphosphoethanolamine = an N-(acyl)-sphingosyl-1,3-cyclic phosphate + ethanolamine. It catalyses the reaction a 1-acyl-sn-glycero-3-phosphocholine = a 1-acyl-sn-glycero-2,3-cyclic phosphate + choline. The catalysed reaction is a 1-acyl-sn-glycero-3-phosphoethanolamine = a 1-acyl-sn-glycero-2,3-cyclic phosphate + ethanolamine. Functionally, dermonecrotic toxins cleave the phosphodiester linkage between the phosphate and headgroup of certain phospholipids (sphingolipid and lysolipid substrates), forming an alcohol (often choline) and a cyclic phosphate. This toxin acts on sphingomyelin (SM). It may also act on ceramide phosphoethanolamine (CPE), lysophosphatidylcholine (LPC) and lysophosphatidylethanolamine (LPE), but not on lysophosphatidylserine (LPS), and lysophosphatidylglycerol (LPG). It acts by transphosphatidylation, releasing exclusively cyclic phosphate products as second products. Induces dermonecrosis, hemolysis, increased vascular permeability, edema, inflammatory response, and platelet aggregation. The polypeptide is Dermonecrotic toxin LdSicTox-alphaIB3b (Loxosceles deserta (Desert recluse spider)).